The chain runs to 968 residues: Leucine--tRNA ligase (968 aa).

Over residues 1–13 (MTETPTGTQSSRE) the composition is skewed to polar residues. The tract at residues 1–22 (MTETPTGTQSSRETAADDTPRH) is disordered. The 'HIGH' region signature appears at 75-86 (PYPSGEGLHVGH). Residues 741–745 (KIGKS) carry the 'KMSKS' region motif. Lysine 744 is a binding site for ATP.

The protein belongs to the class-I aminoacyl-tRNA synthetase family.

The protein localises to the cytoplasm. The catalysed reaction is tRNA(Leu) + L-leucine + ATP = L-leucyl-tRNA(Leu) + AMP + diphosphate. The protein is Leucine--tRNA ligase of Mycolicibacterium vanbaalenii (strain DSM 7251 / JCM 13017 / BCRC 16820 / KCTC 9966 / NRRL B-24157 / PYR-1) (Mycobacterium vanbaalenii).